Consider the following 798-residue polypeptide: Cold shock domain-containing protein E1 (798 aa).

The region spanning 26 to 87 (ETGVIEKLLT…RTGKPIAIKL (62 aa)) is the CSD 1 domain. An N6-acetyllysine modification is found at K81. K91 is covalently cross-linked (Glycyl lysine isopeptide (Lys-Gly) (interchain with G-Cter in SUMO2)). S123 bears the Phosphoserine mark. The CSD 2; truncated domain occupies 136 to 179 (VFYLTYTSEDVEGNVQLETGDKINFVIDNNKHTGAVSARNIMLL). A CSD 3 domain is found at 186–245 (CQGVVCAMKEAFGFIERGDVVKEIFFHYSEFKGDLETLQPGDDVEFTIKDRNGKEVATDV). S276 bears the Phosphoserine mark. A CSD 4; truncated domain is found at 297–337 (LPFGDKDTKSKVTLLEGDHVRFNISTDRRDKLERATNIEVL). CSD domains lie at 349–410 (EMGV…AIRI) and 447–507 (NKGK…ATCV). S514 carries the post-translational modification Phosphoserine. Residues 519–579 (LLGYVATLKD…KGNKVSAEKV (61 aa)) form the CSD 7 domain. S584 is modified (phosphoserine). 2 CSD domains span residues 610–670 (PTQI…AYNI) and 674–735 (RRAT…ACNV). In terms of domain architecture, SUZ-C spans 748 to 789 (PRPDRLVNRLKNITLDDASAPRLMVLRQPRGPDNSMGFGAER). The residue at position 761 (T761) is a Phosphothreonine.

Belongs to the UNR family. As to quaternary structure, component of a multi subunit autoregulatory ribonucleoprotein complex (ARC), at least composed of IGF2BP1, PABPC1 and CSDE1. Interacts with STRAP. Part of a complex associated with the FOS mCRD domain and consisting of PABPC1, PAIP1, HNRPD and SYNCRIP. The interaction with PABPC1 is direct and RNA-independent. Interacts with EIF4ENIF1/4E-T.

It localises to the cytoplasm. The protein localises to the stress granule. Its subcellular location is the P-body. RNA-binding protein involved in translationally coupled mRNA turnover. Implicated with other RNA-binding proteins in the cytoplasmic deadenylation/translational and decay interplay of the FOS mRNA mediated by the major coding-region determinant of instability (mCRD) domain. Required for efficient formation of stress granules. This is Cold shock domain-containing protein E1 from Mus musculus (Mouse).